The chain runs to 443 residues: MNTQLNEIWQKTLGLLKNELTEISFNTWIKTIDPLSLTGNTINLAVPAEFNKGILESRYQTLIKNAIKQVTFKEYEIAFIVPSQENLNKLTKQTESAGNEDSPLSVLNPKYTFDTFVIGNSNRFAHAAALAVAEAPGKAYNPLFIYGGVGLGKTHLMHAIGHYILEQNSSQKVLYVSSEKFTNELINAIKDNRNEEFRSKYRNIDVLLIDDIQFIAGKERTEEEFFHTFNALYEANKQIILSSDKPPKEISLEDRLRSRFEWGLIADMQAPDLETRIAILRKKAQLENLTVPNEVIVFIADKIASNIRELEGALNRVIAYSSLTENEITVELASEALKDILSANKAKVLNCTTIQEAVARYFDIRPEEFKSKKRTRDIAFPRQIAMYLCRELTEMSLPKIGEEFGGRDHTTVIHACEKISEEIESNSETRRAVSEIKRNLLGK.

Residues 1-75 (MNTQLNEIWQ…AIKQVTFKEY (75 aa)) form a domain I, interacts with DnaA modulators region. The interval 75–105 (YEIAFIVPSQENLNKLTKQTESAGNEDSPLS) is domain II. Positions 106–321 (VLNPKYTFDT…GALNRVIAYS (216 aa)) are domain III, AAA+ region. Residues Gly-150, Gly-152, Lys-153, and Thr-154 each contribute to the ATP site. The interval 322-443 (SLTENEITVE…SEIKRNLLGK (122 aa)) is domain IV, binds dsDNA.

Belongs to the DnaA family. Oligomerizes as a right-handed, spiral filament on DNA at oriC.

The protein resides in the cytoplasm. Its function is as follows. Plays an essential role in the initiation and regulation of chromosomal replication. ATP-DnaA binds to the origin of replication (oriC) to initiate formation of the DNA replication initiation complex once per cell cycle. Binds the DnaA box (a 9 base pair repeat at the origin) and separates the double-stranded (ds)DNA. Forms a right-handed helical filament on oriC DNA; dsDNA binds to the exterior of the filament while single-stranded (ss)DNA is stabiized in the filament's interior. The ATP-DnaA-oriC complex binds and stabilizes one strand of the AT-rich DNA unwinding element (DUE), permitting loading of DNA polymerase. After initiation quickly degrades to an ADP-DnaA complex that is not apt for DNA replication. Binds acidic phospholipids. This Acetivibrio thermocellus (strain ATCC 27405 / DSM 1237 / JCM 9322 / NBRC 103400 / NCIMB 10682 / NRRL B-4536 / VPI 7372) (Clostridium thermocellum) protein is Chromosomal replication initiator protein DnaA.